The primary structure comprises 287 residues: CTD small phosphatase-like protein 3 (287 aa).

The region spanning 60–219 (RSTPEYTLVL…LKLCSFLEAI (160 aa)) is the FCP1 homology domain.

Belongs to the CTDSPL2 family.

Functionally, probable phosphatase. The polypeptide is CTD small phosphatase-like protein 3 (scpl-3) (Caenorhabditis elegans).